The primary structure comprises 95 residues: 6 kDa early secretory antigenic target (95 aa).

2 consecutive transmembrane segments (helical) span residues 11–43 (IEAAASAIQGNVTSIHSLLDEGKQSLTKLAAAW) and 49–85 (EAYQGVQQKWDATATELNNALQNLARTISEAGQAMAS). Residues 56 to 87 (QKWDATATELNNALQNLARTISEAGQAMASTE) adopt a coiled-coil conformation.

Belongs to the WXG100 family. ESAT-6 subfamily. Forms a tight 1:1 complex with EsxB (CFP-10).

It localises to the secreted. The protein resides in the host membrane. Functionally, a secreted protein. Acts as a strong host T-cell antigen. Plays a number of roles in modulating the host's immune response to infection as well as being responsible for bacterial escape into the host cytoplasm. This chain is 6 kDa early secretory antigenic target (esxA), found in Mycobacterium bovis (strain ATCC BAA-935 / AF2122/97).